Reading from the N-terminus, the 266-residue chain is Undecaprenyl-diphosphatase (266 aa).

The next 8 membrane-spanning stretches (helical) occupy residues 1–21 (MDTF…FLPI), 39–59 (QGLS…VIYF), 87–107 (WWII…KDFI), 111–131 (LRSA…LWWA), 149–169 (ALLI…RSGA), 183–203 (AAAR…AILV), 218–238 (ALTL…HYFL), and 246–266 (MTPF…FIFL).

It belongs to the UppP family.

It is found in the cell inner membrane. The catalysed reaction is di-trans,octa-cis-undecaprenyl diphosphate + H2O = di-trans,octa-cis-undecaprenyl phosphate + phosphate + H(+). Catalyzes the dephosphorylation of undecaprenyl diphosphate (UPP). Confers resistance to bacitracin. The sequence is that of Undecaprenyl-diphosphatase from Shewanella sp. (strain MR-7).